Consider the following 274-residue polypeptide: 2,3,4,5-tetrahydropyridine-2,6-dicarboxylate N-succinyltransferase (274 aa).

The substrate site is built by arginine 104 and aspartate 141.

The protein belongs to the transferase hexapeptide repeat family. In terms of assembly, homotrimer.

It localises to the cytoplasm. It carries out the reaction (S)-2,3,4,5-tetrahydrodipicolinate + succinyl-CoA + H2O = (S)-2-succinylamino-6-oxoheptanedioate + CoA. It participates in amino-acid biosynthesis; L-lysine biosynthesis via DAP pathway; LL-2,6-diaminopimelate from (S)-tetrahydrodipicolinate (succinylase route): step 1/3. This chain is 2,3,4,5-tetrahydropyridine-2,6-dicarboxylate N-succinyltransferase, found in Escherichia coli O139:H28 (strain E24377A / ETEC).